The following is a 455-amino-acid chain: Bifunctional protein GlmU (455 aa).

The pyrophosphorylase stretch occupies residues 1 to 230; sequence MTKRNAIILA…FDESMGVNDR (230 aa). Residues 9 to 12, Lys-23, Gln-73, 78 to 79, 101 to 103, Gly-140, Glu-155, Asn-170, and Asn-228 each bind UDP-N-acetyl-alpha-D-glucosamine; these read LAAG, GT, and SGD. Asp-103 serves as a coordination point for Mg(2+). Asn-228 serves as a coordination point for Mg(2+). Residues 231-251 are linker; it reads VALARANKVMRNRINTHWMRE. Positions 252–455 are N-acetyltransferase; sequence GVSMIDPETT…KENYAKKLPW (204 aa). Positions 333 and 351 each coordinate UDP-N-acetyl-alpha-D-glucosamine. The active-site Proton acceptor is the His-363. Residues Tyr-366 and Asn-377 each contribute to the UDP-N-acetyl-alpha-D-glucosamine site. Acetyl-CoA contacts are provided by residues 386-387, Ser-405, Ala-423, and Arg-440; that span reads NY.

The protein in the N-terminal section; belongs to the N-acetylglucosamine-1-phosphate uridyltransferase family. This sequence in the C-terminal section; belongs to the transferase hexapeptide repeat family. In terms of assembly, homotrimer. Requires Mg(2+) as cofactor.

It localises to the cytoplasm. It catalyses the reaction alpha-D-glucosamine 1-phosphate + acetyl-CoA = N-acetyl-alpha-D-glucosamine 1-phosphate + CoA + H(+). The enzyme catalyses N-acetyl-alpha-D-glucosamine 1-phosphate + UTP + H(+) = UDP-N-acetyl-alpha-D-glucosamine + diphosphate. It participates in nucleotide-sugar biosynthesis; UDP-N-acetyl-alpha-D-glucosamine biosynthesis; N-acetyl-alpha-D-glucosamine 1-phosphate from alpha-D-glucosamine 6-phosphate (route II): step 2/2. It functions in the pathway nucleotide-sugar biosynthesis; UDP-N-acetyl-alpha-D-glucosamine biosynthesis; UDP-N-acetyl-alpha-D-glucosamine from N-acetyl-alpha-D-glucosamine 1-phosphate: step 1/1. Its pathway is bacterial outer membrane biogenesis; LPS lipid A biosynthesis. Its function is as follows. Catalyzes the last two sequential reactions in the de novo biosynthetic pathway for UDP-N-acetylglucosamine (UDP-GlcNAc). The C-terminal domain catalyzes the transfer of acetyl group from acetyl coenzyme A to glucosamine-1-phosphate (GlcN-1-P) to produce N-acetylglucosamine-1-phosphate (GlcNAc-1-P), which is converted into UDP-GlcNAc by the transfer of uridine 5-monophosphate (from uridine 5-triphosphate), a reaction catalyzed by the N-terminal domain. This chain is Bifunctional protein GlmU, found in Limosilactobacillus reuteri (strain DSM 20016) (Lactobacillus reuteri).